The following is a 420-amino-acid chain: Exodeoxyribonuclease 7 large subunit (420 aa).

Belongs to the XseA family. Heterooligomer composed of large and small subunits.

Its subcellular location is the cytoplasm. It catalyses the reaction Exonucleolytic cleavage in either 5'- to 3'- or 3'- to 5'-direction to yield nucleoside 5'-phosphates.. In terms of biological role, bidirectionally degrades single-stranded DNA into large acid-insoluble oligonucleotides, which are then degraded further into small acid-soluble oligonucleotides. The protein is Exodeoxyribonuclease 7 large subunit of Helicobacter pylori (strain ATCC 700392 / 26695) (Campylobacter pylori).